Consider the following 1339-residue polypeptide: Astrotactin-2 (1339 aa).

Positions 1-49 (MAAAGARLSPGPGSGLRGRPRLCFHPGPPPLLPLLLLFLLLLPPPPLLA) are cleaved as a signal peptide. Residues 50–206 (GATAAASREP…IVEEQMHILH (157 aa)) are Lumenal-facing. A glycan (N-linked (GlcNAc...) asparagine) is linked at asparagine 168. Residues 207-227 (ISVMGGLIALLLLLLVFTVAL) form a helical membrane-spanning segment. Topologically, residues 228–434 (YAQRRWQKRR…KGLLKSPVNK (207 aa)) are cytoplasmic. Disordered regions lie at residues 296–316 (EEDE…EFGS) and 363–408 (TPIE…ADDE). A helical membrane pass occupies residues 435 to 455 (TALTLIAVSSCILAMVCGSQM). Over 456-1339 (SCPLTVKVTL…RNTYGESKGR (884 aa)) the chain is Lumenal. EGF-like domains lie at 510 to 550 (VRDL…HLCV), 651 to 695 (PVRD…SGCY), and 699 to 751 (KGID…KSCL). 9 cysteine pairs are disulfide-bonded: cysteine 514–cysteine 526, cysteine 522–cysteine 533, cysteine 535–cysteine 549, cysteine 655–cysteine 668, cysteine 662–cysteine 679, cysteine 681–cysteine 694, cysteine 703–cysteine 715, cysteine 711–cysteine 735, and cysteine 737–cysteine 750. Asparagine 770 and asparagine 783 each carry an N-linked (GlcNAc...) asparagine glycan. 3 cysteine pairs are disulfide-bonded: cysteine 825/cysteine 987, cysteine 916/cysteine 977, and cysteine 983/cysteine 990. Asparagine 1020 is a glycosylation site (N-linked (GlcNAc...) asparagine). Intrachain disulfides connect cysteine 1036-cysteine 1047, cysteine 1049-cysteine 1062, cysteine 1136-cysteine 1158, cysteine 1190-cysteine 1277, and cysteine 1298-cysteine 1321. One can recognise a Fibronectin type-III domain in the interval 1065–1188 (LLQPVLRLSP…SELSTVTLRT (124 aa)).

It belongs to the astrotactin family. Interacts with ASTN1; the interaction is not calcium-dependent.

It localises to the membrane. It is found in the perikaryon. Its subcellular location is the cytoplasm. The protein localises to the cell cortex. The protein resides in the early endosome. It localises to the late endosome. It is found in the cytoplasmic vesicle. Its subcellular location is the clathrin-coated vesicle. Mediates recycling of the neuronal cell adhesion molecule ASTN1 to the anterior pole of the cell membrane in migrating neurons. Promotes ASTN1 internalization and intracellular transport of endocytosed ASTN1. Selectively binds inositol-4,5-bisphosphate, inositol-3,4,5-trisphosphate and inositol-1,3,4,5-tetrakisphosphate, suggesting it is recruited to membranes that contain lipids with a phosphoinositide headgroup. The protein is Astrotactin-2 (ASTN2) of Homo sapiens (Human).